We begin with the raw amino-acid sequence, 181 residues long: Translation initiation factor IF-3, chloroplastic (181 aa).

This sequence belongs to the IF-3 family. In terms of assembly, monomer.

It localises to the plastid. The protein localises to the chloroplast. In terms of biological role, IF-3 binds to the 30S ribosomal subunit and shifts the equilibrium between 70S ribosomes and their 50S and 30S subunits in favor of the free subunits, thus enhancing the availability of 30S subunits on which protein synthesis initiation begins. The polypeptide is Translation initiation factor IF-3, chloroplastic (Galdieria sulphuraria (Red alga)).